A 515-amino-acid chain; its full sequence is Putative acetolactate synthase large subunit IlvX (515 aa).

Residue glutamate 48 participates in thiamine diphosphate binding. FAD contacts are provided by residues 249 to 269 and 283 to 302; these read FAEG…AGAR and DLVP…GAAD. The thiamine pyrophosphate binding stretch occupies residues 357 to 436; sequence TCGVLLPQAT…VTTVIYNNGA (80 aa). Aspartate 407 and asparagine 434 together coordinate Mg(2+).

The protein belongs to the TPP enzyme family. As to quaternary structure, heterodimer of large catalytic subunit and small regulatory subunit. Requires Mg(2+) as cofactor. Thiamine diphosphate is required as a cofactor.

The enzyme catalyses 2 pyruvate + H(+) = (2S)-2-acetolactate + CO2. Its pathway is amino-acid biosynthesis; L-isoleucine biosynthesis; L-isoleucine from 2-oxobutanoate: step 1/4. It participates in amino-acid biosynthesis; L-valine biosynthesis; L-valine from pyruvate: step 1/4. Catalyzes the conversion of 2 pyruvate molecules into acetolactate in the first common step of the biosynthetic pathway of the branched-amino acids such as leucine, isoleucine, and valine. The sequence is that of Putative acetolactate synthase large subunit IlvX (ilvX) from Mycobacterium tuberculosis (strain ATCC 25618 / H37Rv).